The primary structure comprises 264 residues: Neurexophilin-2 (264 aa).

Positions 1–22 are cleaved as a signal peptide; that stretch reads MRLRPLPLVVVPGLLQLLFCDS. Residues 23 to 90 form an II region; that stretch reads EKVVHATEGL…WDWLANITEV (68 aa). N-linked (GlcNAc...) asparagine glycans are attached at residues Asn86, Asn139, Asn149, and Asn155. An III region spans residues 91–169; sequence QEPLARTKRR…LVPPSKVVEF (79 aa). An IV (linker domain) region spans residues 170–178; that stretch reads EVSPQSTLE. The interval 179–264 is v (Cys-rich); that stretch reads TKESKSFNCR…HSETPYLSSG (86 aa).

Belongs to the neurexophilin family. In terms of processing, may be proteolytically processed at the boundary between the N-terminal non-conserved and the central conserved domain in neuron-like cells. As to expression, brain, only in a scattered subpopulation of neurons that probably represent inhibitory interneurons.

It localises to the secreted. In terms of biological role, may be signaling molecules that resemble neuropeptides and that act by binding to alpha-neurexins and possibly other receptors. This is Neurexophilin-2 (NXPH2) from Bos taurus (Bovine).